We begin with the raw amino-acid sequence, 190 residues long: Lipid A acyltransferase PagP (190 aa).

The signal sequence occupies residues 1–24 (MNRYLLTTLSAPLLALFFSFSLQA). Catalysis depends on residues His-62, Asp-105, and Ser-106.

The protein belongs to the lipid A palmitoyltransferase family. As to quaternary structure, homodimer.

It localises to the cell outer membrane. The catalysed reaction is a lipid A + a 1,2-diacyl-sn-glycero-3-phosphocholine = a hepta-acyl lipid A + a 2-acyl-sn-glycero-3-phosphocholine. It catalyses the reaction a lipid IVA + a 1,2-diacyl-sn-glycero-3-phosphocholine = a lipid IVB + a 2-acyl-sn-glycero-3-phosphocholine. It carries out the reaction a lipid IIA + a 1,2-diacyl-sn-glycero-3-phosphocholine = a lipid IIB + a 2-acyl-sn-glycero-3-phosphocholine. In terms of biological role, transfers a fatty acid residue from the sn-1 position of a phospholipid to the N-linked hydroxyfatty acid chain on the proximal unit of lipid A or its precursors. This is Lipid A acyltransferase PagP from Pantoea ananatis (strain LMG 20103).